A 223-amino-acid chain; its full sequence is Cytidine deaminase 3 (223 aa).

CMP/dCMP-type deaminase domains lie at 21 to 154 (TEPM…FSPD) and 184 to 223 (SDCS…WYRG). 62–64 (NVE) provides a ligand contact to substrate. A Zn(2+)-binding site is contributed by histidine 75. The active-site Proton donor is the glutamate 77. Residues cysteine 110 and cysteine 113 each coordinate Zn(2+).

Belongs to the cytidine and deoxycytidylate deaminase family. In terms of assembly, homodimer. Zn(2+) serves as cofactor.

The catalysed reaction is cytidine + H2O + H(+) = uridine + NH4(+). It catalyses the reaction 2'-deoxycytidine + H2O + H(+) = 2'-deoxyuridine + NH4(+). Functionally, this enzyme scavenges exogenous and endogenous cytidine and 2'-deoxycytidine for UMP synthesis. This Arabidopsis thaliana (Mouse-ear cress) protein is Cytidine deaminase 3 (CDA3).